The following is a 522-amino-acid chain: uncharacterized protein (522 aa).

The span at 1 to 11 shows a compositional bias: low complexity; sequence MSSITSRVSSR. The interval 1-20 is disordered; it reads MSSITSRVSSRSSHELTEKK. 12 helical membrane passes run 69–89, 116–136, 141–161, 173–193, 204–224, 236–256, 303–323, 338–358, 367–387, 396–416, 428–448, and 462–482; these read VLWKIDLVMMPVMCITYMIQY, SMTTLFYAGYLVAQYPAAILM, LSYFIFCNVFLWSAMVCLMAA, FLAGIFEASITPAFINITAMW, LCWYAFNGIAQIIGSILSYGL, YVFIVIGLMSLGWGVVFVFIP, VIMITLFTGVCMITNGIGVFS, AVLNMPLGAIEVAAMFISGVL, LLIGVFMNCLTLAGCLMIWKI, LVGVWFTMWVPASSALLLSLI, VTSATVFVFYSVGNIVSPQLF, and AMIVSLCIIIAIAFVLTGYYI.

Belongs to the major facilitator superfamily. Allantoate permease family.

The protein localises to the endoplasmic reticulum. It is found in the membrane. This is an uncharacterized protein from Schizosaccharomyces pombe (strain 972 / ATCC 24843) (Fission yeast).